The following is a 252-amino-acid chain: 3-dehydroquinate dehydratase (252 aa).

3-dehydroquinate is bound by residues 47-49 (EWR) and R83. The active-site Proton donor/acceptor is H144. The Schiff-base intermediate with substrate role is filled by K171. Positions 213, 232, and 236 each coordinate 3-dehydroquinate.

The protein belongs to the type-I 3-dehydroquinase family. In terms of assembly, homodimer.

It carries out the reaction 3-dehydroquinate = 3-dehydroshikimate + H2O. It participates in metabolic intermediate biosynthesis; chorismate biosynthesis; chorismate from D-erythrose 4-phosphate and phosphoenolpyruvate: step 3/7. Involved in the third step of the chorismate pathway, which leads to the biosynthesis of aromatic amino acids. Catalyzes the cis-dehydration of 3-dehydroquinate (DHQ) and introduces the first double bond of the aromatic ring to yield 3-dehydroshikimate. This is 3-dehydroquinate dehydratase from Lactiplantibacillus plantarum (strain ATCC BAA-793 / NCIMB 8826 / WCFS1) (Lactobacillus plantarum).